The following is a 71-amino-acid chain: Conotoxin Lt11.3 (71 aa).

An N-terminal signal peptide occupies residues 1–26 (MMFRLTSVGCILLVIAFLNLVGLTNA). Disulfide bonds link Cys-27–Cys-41, Cys-34–Cys-46, Cys-40–Cys-50, and Cys-45–Cys-54. Pro-57 carries the proline amide modification. A propeptide spanning residues 61–71 (TRLQGFFKHRR) is cleaved from the precursor.

Belongs to the conotoxin I2 superfamily. As to expression, expressed by the venom duct.

It localises to the secreted. In terms of biological role, probable neurotoxin. The protein is Conotoxin Lt11.3 of Conus litteratus (Lettered cone).